The following is a 392-amino-acid chain: Phosphopentomutase (392 aa).

Residues D15, D287, H292, D328, H329, and H340 each coordinate Mn(2+).

The protein belongs to the phosphopentomutase family. The cofactor is Mn(2+).

The protein localises to the cytoplasm. The enzyme catalyses 2-deoxy-alpha-D-ribose 1-phosphate = 2-deoxy-D-ribose 5-phosphate. It catalyses the reaction alpha-D-ribose 1-phosphate = D-ribose 5-phosphate. It participates in carbohydrate degradation; 2-deoxy-D-ribose 1-phosphate degradation; D-glyceraldehyde 3-phosphate and acetaldehyde from 2-deoxy-alpha-D-ribose 1-phosphate: step 1/2. In terms of biological role, isomerase that catalyzes the conversion of deoxy-ribose 1-phosphate (dRib-1-P) and ribose 1-phosphate (Rib-1-P) to deoxy-ribose 5-phosphate (dRib-5-P) and ribose 5-phosphate (Rib-5-P), respectively. The chain is Phosphopentomutase from Syntrophotalea carbinolica (strain DSM 2380 / NBRC 103641 / GraBd1) (Pelobacter carbinolicus).